Here is a 377-residue protein sequence, read N- to C-terminus: E3 ubiquitin-protein ligase rififylin (377 aa).

The FYVE-type zinc-finger motif lies at 55–107; the sequence is TGSEPSCKACGVHFASTTRKQTCLDCKKNFCMTCSSQEGNGPRLCLLCLRFRA. In terms of domain architecture, SAP 1 spans 115 to 134; the sequence is LMKMKVKDLRDYLSLHDIST. The interval 176-249 is disordered; the sequence is LTQPQTSTVP…SVDSEDSFVP (74 aa). The segment covering 190 to 212 has biased composition (polar residues); that stretch reads GLPSSPAQVTSVPLAQDQETQQA. Over residues 235–245 the composition is skewed to acidic residues; it reads EDETQSVDSED. Phosphoserine occurs at positions 240, 243, 246, and 254. Residues 264–278 enclose the SAP 2 domain; the sequence is IEGLTVRQLKEILAR. The RING-type zinc finger occupies 330–365; that stretch reads CKICMDSPIDCVLLECGHMVTCTKCGKRMNECPICR.

In terms of assembly, interacts with CASP8 and CASP10. Interacts with RIPK1 (via protein kinase domain); involved in RIPK1 ubiquitination. Interacts with PRR5L. Interacts (via RING-type zinc finger) with p53/TP53; involved in p53/TP53 ubiquitination. Interacts (via RING-type zinc finger) with MDM2; the interaction stabilizes MDM2. In terms of processing, autoubiquitinated. Post-translationally, palmitoylated. Undergoes caspase-mediated cleavage upon death-receptor activation, by TNFSF10 for instance. May be mediated by the caspases CASP8 and CASP10 in a negative feedback loop. As to expression, ubiquitous. Detected in heart, brain, spleen, lung, liver, skeletal muscle, kidney, testis, thymus, whole embryo and embryonic stem cells.

Its subcellular location is the cytoplasm. It localises to the cytosol. The protein localises to the cell membrane. The protein resides in the recycling endosome membrane. The catalysed reaction is S-ubiquitinyl-[E2 ubiquitin-conjugating enzyme]-L-cysteine + [acceptor protein]-L-lysine = [E2 ubiquitin-conjugating enzyme]-L-cysteine + N(6)-ubiquitinyl-[acceptor protein]-L-lysine.. It participates in protein modification; protein ubiquitination. E3 ubiquitin-protein ligase that regulates several biological processes through the ubiquitin-mediated proteasomal degradation of various target proteins. Mediates 'Lys-48'-linked polyubiquitination of PRR5L and its subsequent proteasomal degradation thereby indirectly regulating cell migration through the mTORC2 complex. Also ubiquitinates the caspases CASP8 and CASP10, promoting their proteasomal degradation, to negatively regulate apoptosis downstream of death domain receptors. Also negatively regulates the tumor necrosis factor-mediated signaling pathway through targeting of RIPK1 to ubiquitin-mediated proteasomal degradation. Negatively regulates p53/TP53 through its direct ubiquitination and targeting to proteasomal degradation. Indirectly, may also negatively regulate p53/TP53 through ubiquitination and degradation of SFN. May also play a role in endocytic recycling. In Mus musculus (Mouse), this protein is E3 ubiquitin-protein ligase rififylin.